Consider the following 198-residue polypeptide: Probable chemoreceptor glutamine deamidase CheD (198 aa).

Belongs to the CheD family.

The catalysed reaction is L-glutaminyl-[protein] + H2O = L-glutamyl-[protein] + NH4(+). Probably deamidates glutamine residues to glutamate on methyl-accepting chemotaxis receptors (MCPs), playing an important role in chemotaxis. The polypeptide is Probable chemoreceptor glutamine deamidase CheD (Xanthomonas campestris pv. campestris (strain 8004)).